A 93-amino-acid polypeptide reads, in one-letter code: Large ribosomal subunit protein bL27 (93 aa).

Positions 1 to 9 (MIKINLQLF) are excised as a propeptide.

This sequence belongs to the bacterial ribosomal protein bL27 family. The N-terminus is cleaved by ribosomal processing cysteine protease Prp.

This Ruminiclostridium cellulolyticum (strain ATCC 35319 / DSM 5812 / JCM 6584 / H10) (Clostridium cellulolyticum) protein is Large ribosomal subunit protein bL27.